The chain runs to 389 residues: Tubby-like F-box protein 11 (389 aa).

The F-box domain occupies 36 to 82 (DYRWSEIPEELLREILIRVEAADGGGWPSRRSVVACAGVCRGWRLLM). The disordered stretch occupies residues 250–289 (STMEPQGVASEPSEFPLLGTRSTLSRSQSKPLRSSSSHLK). Low complexity predominate over residues 273–286 (LSRSQSKPLRSSSS).

Belongs to the TUB family. As to expression, ubiquitous.

The protein is Tubby-like F-box protein 11 of Arabidopsis thaliana (Mouse-ear cress).